Here is a 502-residue protein sequence, read N- to C-terminus: Carbon catabolite-derepressing protein kinase (502 aa).

The Protein kinase domain occupies 14-269 (YYLGKILGVG…IGEIRKHSWF (256 aa)). ATP-binding positions include 20–28 (LGVGTFAKV) and K43. The active-site Proton acceptor is the D140. T173 bears the Phosphothreonine; by autocatalysis mark. Positions 290-330 (MIDEDTLRDVVKLGYDKDHVCESLCNRLQNEETVAYYLLLD) constitute a UBA domain. The region spanning 453–501 (NSRLPAVIKFEIQLYKTKDDKYLLDMQRVTGPQLLFLEFCAAFLTNLRV) is the KA1 domain.

It belongs to the protein kinase superfamily. CAMK Ser/Thr protein kinase family. SNF1 subfamily.

It carries out the reaction L-seryl-[protein] + ATP = O-phospho-L-seryl-[protein] + ADP + H(+). The catalysed reaction is L-threonyl-[protein] + ATP = O-phospho-L-threonyl-[protein] + ADP + H(+). Functionally, essential for release from glucose repression. This chain is Carbon catabolite-derepressing protein kinase (RKIN1), found in Secale cereale (Rye).